The primary structure comprises 488 residues: G-patch domain and KOW motifs-containing protein (488 aa).

Positions 1–11 are enriched in pro residues; sequence MAGRESPPPSA. The interval 1–20 is disordered; that stretch reads MAGRESPPPSAPSMAPISFG. Residue Ala2 is modified to N-acetylalanine. A Phosphoserine; by PKA modification is found at Ser25. Positions 72–97 are disordered; it reads IQNGSRRQPLSKNPKPSSETSTVLMS. Polar residues predominate over residues 73–95; it reads QNGSRRQPLSKNPKPSSETSTVL. Ser115 is subject to Phosphoserine. Positions 164-210 constitute a G-patch domain; sequence VEAYGLAMLRGMGWKPGKGIGNTFSQVVKPRVNSIRPKGLGLGANRM. Disordered stretches follow at residues 216–241 and 295–367; these read ASVG…PQGL and QEFD…PRNK. The span at 224-236 shows a compositional bias: basic and acidic residues; that stretch reads PRPDGDRENDKEG. The region spanning 231–258 is the KOW 1 domain; the sequence is ENDKEGQPQGLMHGRAVVVLSGPYRGLY. The span at 307–331 shows a compositional bias: polar residues; sequence VSQTSTEQQNRATGTASSLKAAQNQ. Basic and acidic residues-rich tracts occupy residues 332 to 341 and 349 to 363; these read EDSKRRQKGS and PDRQ…EKAA. The region spanning 401 to 428 is the KOW 2 domain; it reads PDTCVCRTDEGRVLEDVREDMLETLIPK. Phosphoserine is present on Ser485.

This sequence belongs to the MOS2 family. As to quaternary structure, component of the minor spliceosome, which splices U12-type introns. Interacts with PRKX, PRKACB and DHX16. In terms of processing, phosphorylation regulates its ability to bind RNA.

Its subcellular location is the nucleus. Functionally, RNA-binding protein involved in pre-mRNA splicing. As a component of the minor spliceosome, involved in the splicing of U12-type introns in pre-mRNAs. This Mus musculus (Mouse) protein is G-patch domain and KOW motifs-containing protein (Gpkow).